We begin with the raw amino-acid sequence, 280 residues long: Urease accessory protein UreD 1 (280 aa).

The protein belongs to the UreD family. In terms of assembly, ureD, UreF and UreG form a complex that acts as a GTP-hydrolysis-dependent molecular chaperone, activating the urease apoprotein by helping to assemble the nickel containing metallocenter of UreC. The UreE protein probably delivers the nickel.

The protein localises to the cytoplasm. Its function is as follows. Required for maturation of urease via the functional incorporation of the urease nickel metallocenter. This chain is Urease accessory protein UreD 1, found in Bradyrhizobium sp. (strain BTAi1 / ATCC BAA-1182).